Consider the following 147-residue polypeptide: Large ribosomal subunit protein uL11 (147 aa).

This sequence belongs to the universal ribosomal protein uL11 family. In terms of assembly, part of the ribosomal stalk of the 50S ribosomal subunit. Interacts with L10 and the large rRNA to form the base of the stalk. L10 forms an elongated spine to which L12 dimers bind in a sequential fashion forming a multimeric L10(L12)X complex. Post-translationally, one or more lysine residues are methylated.

Forms part of the ribosomal stalk which helps the ribosome interact with GTP-bound translation factors. This is Large ribosomal subunit protein uL11 from Cytophaga hutchinsonii (strain ATCC 33406 / DSM 1761 / CIP 103989 / NBRC 15051 / NCIMB 9469 / D465).